Here is a 312-residue protein sequence, read N- to C-terminus: Ribonuclease Z (312 aa).

Residues H62, H64, D66, H67, H144, D215, and H273 each contribute to the Zn(2+) site. Residue D66 is the Proton acceptor of the active site.

This sequence belongs to the RNase Z family. Homodimer. The cofactor is Zn(2+).

The enzyme catalyses Endonucleolytic cleavage of RNA, removing extra 3' nucleotides from tRNA precursor, generating 3' termini of tRNAs. A 3'-hydroxy group is left at the tRNA terminus and a 5'-phosphoryl group is left at the trailer molecule.. Zinc phosphodiesterase, which displays some tRNA 3'-processing endonuclease activity. Probably involved in tRNA maturation, by removing a 3'-trailer from precursor tRNA. The polypeptide is Ribonuclease Z (Prochlorococcus marinus subsp. pastoris (strain CCMP1986 / NIES-2087 / MED4)).